Here is a 519-residue protein sequence, read N- to C-terminus: Pleckstrin homology domain-containing family A member 8 (519 aa).

The region spanning 1-93 is the PH domain; sequence MEGVLYKWTN…WLVALGSAKA (93 aa). T139 carries the phosphothreonine modification. S145 bears the Phosphoserine mark. T153 bears the Phosphothreonine mark. Residues 274-302 form a disordered region; it reads GEDNLGNHDSSLAQPASDSSSSPPESHWE. Positions 282-298 are enriched in low complexity; that stretch reads DSSLAQPASDSSSSPPE. The segment at 310–519 is glycolipid transfer protein homology domain; sequence TFFSTMNTSF…VHGLESDEVV (210 aa).

Homodimer. Interacts with ARF1; the interaction together with phosphatidylinositol 4-phosphate binding is required for FAPP2 GlcCer transfer ability.

Its subcellular location is the golgi apparatus. It localises to the trans-Golgi network membrane. It is found in the membrane. In terms of biological role, cargo transport protein that is required for apical transport from the trans-Golgi network (TGN). Transports AQP2 from the trans-Golgi network (TGN) to sites of AQP2 phosphorylation. Mediates the non-vesicular transport of glucosylceramide (GlcCer) from the trans-Golgi network (TGN) to the plasma membrane and plays a pivotal role in the synthesis of complex glycosphingolipids. Binding of both phosphatidylinositol 4-phosphate (PIP) and ARF1 are essential for the GlcCer transfer ability. Also required for primary cilium formation, possibly by being involved in the transport of raft lipids to the apical membrane, and for membrane tubulation. The sequence is that of Pleckstrin homology domain-containing family A member 8 (PLEKHA8) from Canis lupus familiaris (Dog).